Here is a 540-residue protein sequence, read N- to C-terminus: Chaperonin GroEL 2 (540 aa).

ATP is bound by residues 29–32, Lys50, 86–90, Gly414, and Asp496; these read TMGP and DGTTT.

Belongs to the chaperonin (HSP60) family. Forms a cylinder of 14 subunits composed of two heptameric rings stacked back-to-back. Interacts with the co-chaperonin GroES.

The protein localises to the cytoplasm. It carries out the reaction ATP + H2O + a folded polypeptide = ADP + phosphate + an unfolded polypeptide.. Together with its co-chaperonin GroES, plays an essential role in assisting protein folding. The GroEL-GroES system forms a nano-cage that allows encapsulation of the non-native substrate proteins and provides a physical environment optimized to promote and accelerate protein folding. This chain is Chaperonin GroEL 2, found in Rhodopirellula baltica (strain DSM 10527 / NCIMB 13988 / SH1).